We begin with the raw amino-acid sequence, 63 residues long: Large ribosomal subunit protein uL29 (63 aa).

It belongs to the universal ribosomal protein uL29 family.

The chain is Large ribosomal subunit protein uL29 from Mannheimia succiniciproducens (strain KCTC 0769BP / MBEL55E).